We begin with the raw amino-acid sequence, 557 residues long: ABC1 family protein MCP2 homolog (557 aa).

Residues 1–33 (MFSRFSWPRITRCFRSYPKKKSSCISFTHHARE) constitute a mitochondrion transit peptide. Topologically, residues 34-39 (HTNFKK) are mitochondrial matrix. The chain crosses the membrane as a helical span at residues 40–56 (PAVVGASITLMASVALV). Over 57–557 (DFDPVKHAGV…NYFYYKHMYL (501 aa)) the chain is Mitochondrial intermembrane.

The protein belongs to the protein kinase superfamily. ADCK protein kinase family.

It localises to the mitochondrion inner membrane. Functionally, involved in mitochondrial lipid homeostasis. The chain is ABC1 family protein MCP2 homolog from Schizosaccharomyces pombe (strain 972 / ATCC 24843) (Fission yeast).